The primary structure comprises 62 residues: Alpha-elapitoxin-Nn2a (62 aa).

Residues 1-20 (LECHNQQSSQTPTTTDCSGG) form a disordered region. 4 disulfides stabilise this stretch: C3/C24, C17/C41, C43/C54, and C55/C60.

It belongs to the three-finger toxin family. Short-chain subfamily. Type I alpha-neurotoxin sub-subfamily. Expressed by the venom gland.

It localises to the secreted. Nicotinic acetylcholine receptor antagonist. Binds to muscle nicotinic acetylcholine receptor (nAChR) and inhibits acetylcholine from binding to the receptor, thereby impairing neuromuscular transmission. Produces peripheral paralysis by blocking neuromuscular transmission at the postsynaptic site. Induces concentration-dependent inhibition of indirect twitches and abolishes contractile responses of tissues to exogenous acetylcholine and carbachol, in the chick biventer cervicis nerve-muscle preparation at 100-300 nM (in vitro). Prior incubation of tissues with Indian polyvalent antivenom (1 ml/0.6 mg) prevents the neurotoxic effects at 100 nM (in vitro). Addition of Indian polyvalent antivenom (1 ml/0.6 mg) at the t90 time point does not reverse the neurotoxic effects (in vitro). Displays non-competitive antagonism of concentration-response curves to carbachol, with a pA2 of 8.01 (in vitro). The protein is Alpha-elapitoxin-Nn2a of Naja naja (Indian cobra).